A 297-amino-acid polypeptide reads, in one-letter code: Sirohydrochlorin cobaltochelatase CbiKP (297 aa).

A signal peptide spans 1 to 28 (MSRHPMVTRLLCLVFSCLIILACSPAFA). His124 contributes to the heme binding site. His182 acts as the Proton acceptor in catalysis. Residues His182, Glu212, and His244 each contribute to the Co(2+) site.

This sequence belongs to the CbiK family. As to quaternary structure, homotetramer; dimer of dimers.

It is found in the periplasm. The catalysed reaction is Co-sirohydrochlorin + 2 H(+) = sirohydrochlorin + Co(2+). It catalyses the reaction siroheme + 2 H(+) = sirohydrochlorin + Fe(2+). Functionally, catalyzes the insertion of Co(2+) into sirohydrochlorin. To a lesser extent, is also able to insert Fe(2+) into sirohydrochlorin, yielding siroheme. Its periplasmic location means that it cannot participate in cobalamin biosynthesis and its genomic environment suggests it is likely to be associated with a heme or metal transport system. The protein is Sirohydrochlorin cobaltochelatase CbiKP (cbiKp) of Nitratidesulfovibrio vulgaris (strain ATCC 29579 / DSM 644 / CCUG 34227 / NCIMB 8303 / VKM B-1760 / Hildenborough) (Desulfovibrio vulgaris).